Consider the following 526-residue polypeptide: Peptide chain release factor 3 (526 aa).

Positions 8 to 277 (NKRRTFAIIS…GLTEWAPKPQ (270 aa)) constitute a tr-type G domain. GTP is bound by residues 17-24 (SHPDAGKT), 85-89 (DTPGH), and 139-142 (NKLD).

The protein belongs to the TRAFAC class translation factor GTPase superfamily. Classic translation factor GTPase family. PrfC subfamily.

It is found in the cytoplasm. Its function is as follows. Increases the formation of ribosomal termination complexes and stimulates activities of RF-1 and RF-2. It binds guanine nucleotides and has strong preference for UGA stop codons. It may interact directly with the ribosome. The stimulation of RF-1 and RF-2 is significantly reduced by GTP and GDP, but not by GMP. The sequence is that of Peptide chain release factor 3 from Actinobacillus pleuropneumoniae serotype 5b (strain L20).